The chain runs to 541 residues: Arginine--tRNA ligase (541 aa).

The 'HIGH' region motif lies at 119-129 (ANPTGPLHIGH).

The protein belongs to the class-I aminoacyl-tRNA synthetase family. In terms of assembly, monomer.

It localises to the cytoplasm. It carries out the reaction tRNA(Arg) + L-arginine + ATP = L-arginyl-tRNA(Arg) + AMP + diphosphate. The polypeptide is Arginine--tRNA ligase (argS) (Helicobacter pylori (strain J99 / ATCC 700824) (Campylobacter pylori J99)).